The following is a 165-amino-acid chain: MRIDTSALCDIYSDQVDVVEPIFSSFGGVSSFYGKITTVKCFESNGLIASVLEEEGQGRVLLIDGGGAVRRALIDTELAQLALDNGWEGIIVYGAVRQLDVLETLDIGIHALAPIPVGADDNEIGEVDTPVNFGGVTFFPEDYVYADLTGIILSPELLDLAELEE.

It belongs to the RraA family. As to quaternary structure, homotrimer. Binds to both RNA-binding sites in the C-terminal region of Rne and to RhlB.

It is found in the cytoplasm. Its function is as follows. Globally modulates RNA abundance by binding to RNase E (Rne) and regulating its endonucleolytic activity. Can modulate Rne action in a substrate-dependent manner by altering the composition of the degradosome. Modulates RNA-binding and helicase activities of the degradosome. The protein is Regulator of ribonuclease activity A of Actinobacillus pleuropneumoniae serotype 7 (strain AP76).